Consider the following 149-residue polypeptide: Putative pre-16S rRNA nuclease (149 aa).

Belongs to the YqgF nuclease family.

The protein resides in the cytoplasm. In terms of biological role, could be a nuclease involved in processing of the 5'-end of pre-16S rRNA. This Synechococcus sp. (strain ATCC 27144 / PCC 6301 / SAUG 1402/1) (Anacystis nidulans) protein is Putative pre-16S rRNA nuclease.